A 379-amino-acid chain; its full sequence is Acyl-CoA dehydrogenase, short-chain specific (379 aa).

The protein belongs to the acyl-CoA dehydrogenase family. The cofactor is FAD.

The catalysed reaction is butanoyl-CoA + oxidized [electron-transfer flavoprotein] + H(+) = (2E)-butenoyl-CoA + reduced [electron-transfer flavoprotein]. The enzyme catalyses a short-chain 2,3-saturated fatty acyl-CoA + oxidized [electron-transfer flavoprotein] + H(+) = a short-chain (2E)-enoyl-CoA + reduced [electron-transfer flavoprotein]. It participates in lipid metabolism; butanoate metabolism. The sequence is that of Acyl-CoA dehydrogenase, short-chain specific (bcd) from Clostridium acetobutylicum (strain ATCC 824 / DSM 792 / JCM 1419 / IAM 19013 / LMG 5710 / NBRC 13948 / NRRL B-527 / VKM B-1787 / 2291 / W).